The chain runs to 271 residues: WUSCHEL-related homeobox 6 (271 aa).

Residues 57-121 constitute a DNA-binding region (homeobox; WUS-type); that stretch reads AATLRWNPTP…NHKARERLKR (65 aa). The interval 118 to 195 is disordered; the sequence is RLKRRRREGG…TEESDQRASE (78 aa). Composition is skewed to basic and acidic residues over residues 132–148 and 180–195; these read PHKD…RVDQ and NEDH…RASE.

Belongs to the WUS homeobox family. Highly expressed in developing ovules. Present in developing primordia and differentiating organs but absent in mature organs.

The protein resides in the nucleus. Transcription factor that plays a central role in ovule patterning by regulating cell proliferation of the maternal integuments and differentiation of the maegaspore mother cell (MCC). Involved in AGAMOUS (AG) repression in leaves. This Arabidopsis thaliana (Mouse-ear cress) protein is WUSCHEL-related homeobox 6 (WOX6).